The following is a 544-amino-acid chain: Serine/threonine-protein kinase bur1 (544 aa).

The Protein kinase domain occupies 25–326 (FEFLGKLGEG…AIDALKHPYF (302 aa)). Residues 31 to 39 (LGEGTFGEV) and Lys54 contribute to the ATP site. The active-site Proton acceptor is Asp155. Residues 357–544 (AAMPPAPAGG…ERVDRGPYRR (188 aa)) form a disordered region. Positions 374–403 (GGWSTNSGSRTGAETRNPRISSAARSQGNQ) are enriched in polar residues. Basic and acidic residues-rich tracts occupy residues 419–438 (RGNE…HRDG), 456–466 (HSDKTGRDRGY), 488–511 (DRNR…DKSH), and 532–544 (NYRE…PYRR).

Belongs to the protein kinase superfamily. CMGC Ser/Thr protein kinase family. CDC2/CDKX subfamily.

Its subcellular location is the nucleus. It carries out the reaction L-seryl-[protein] + ATP = O-phospho-L-seryl-[protein] + ADP + H(+). The enzyme catalyses L-threonyl-[protein] + ATP = O-phospho-L-threonyl-[protein] + ADP + H(+). The catalysed reaction is [DNA-directed RNA polymerase] + ATP = phospho-[DNA-directed RNA polymerase] + ADP + H(+). In terms of biological role, serine/threonine-protein kinase involved in transcription regulation. Phosphorylates the UBC2/RAD6 ubiquitin-conjugating enzyme (E2), leading to monoubiquitination of histone H2B and the silencing of telomeric-associated genes. Also required for histone H3 methylation. Necessary for the recovery from pheromone-induced growth arrest in the cell cycle G1 phase. The sequence is that of Serine/threonine-protein kinase bur1 (ptkA) from Emericella nidulans (strain FGSC A4 / ATCC 38163 / CBS 112.46 / NRRL 194 / M139) (Aspergillus nidulans).